A 430-amino-acid chain; its full sequence is Histidine--tRNA ligase (430 aa).

This sequence belongs to the class-II aminoacyl-tRNA synthetase family. Homodimer.

The protein localises to the cytoplasm. The enzyme catalyses tRNA(His) + L-histidine + ATP = L-histidyl-tRNA(His) + AMP + diphosphate + H(+). This is Histidine--tRNA ligase from Chlorobaculum parvum (strain DSM 263 / NCIMB 8327) (Chlorobium vibrioforme subsp. thiosulfatophilum).